A 294-amino-acid chain; its full sequence is 4-hydroxy-tetrahydrodipicolinate synthase (294 aa).

A pyruvate-binding site is contributed by S47. Y135 functions as the Proton donor/acceptor in the catalytic mechanism. K163 serves as the catalytic Schiff-base intermediate with substrate. I205 contributes to the pyruvate binding site.

Belongs to the DapA family. In terms of assembly, homotetramer; dimer of dimers.

Its subcellular location is the cytoplasm. The catalysed reaction is L-aspartate 4-semialdehyde + pyruvate = (2S,4S)-4-hydroxy-2,3,4,5-tetrahydrodipicolinate + H2O + H(+). Its pathway is amino-acid biosynthesis; L-lysine biosynthesis via DAP pathway; (S)-tetrahydrodipicolinate from L-aspartate: step 3/4. Catalyzes the condensation of (S)-aspartate-beta-semialdehyde [(S)-ASA] and pyruvate to 4-hydroxy-tetrahydrodipicolinate (HTPA). This chain is 4-hydroxy-tetrahydrodipicolinate synthase, found in Ralstonia nicotianae (strain ATCC BAA-1114 / GMI1000) (Ralstonia solanacearum).